Here is a 112-residue protein sequence, read N- to C-terminus: Ig kappa chain V-III region TEPC 124 (112 aa).

The framework-1 stretch occupies residues 1 to 23 (DIVLTQSPASLAVSLGQRATISC). A disulfide bridge links cysteine 23 with cysteine 92. Residues 24–38 (RASZSVNWYGNSFMZ) are complementarity-determining-1. The tract at residues 39–53 (WYZZKPGZPPKLLIY) is framework-2. Residues 54–60 (RASNLZS) are complementarity-determining-2. Residues 61 to 92 (GIPARFSGSGSRTBFTLTIBPVZABDVATYFC) are framework-3. The tract at residues 93–101 (ZZSBZAPWT) is complementarity-determining-3. Residues 102–111 (FGSGTKLEIK) are framework-4.

The sequence is that of Ig kappa chain V-III region TEPC 124 from Mus musculus (Mouse).